Consider the following 711-residue polypeptide: Polyribonucleotide nucleotidyltransferase (711 aa).

Residues aspartate 486 and aspartate 492 each contribute to the Mg(2+) site. The KH domain maps to proline 553–isoleucine 612. Positions glycine 622–lysine 690 constitute an S1 motif domain. A disordered region spans residues lysine 690–glutamate 711. Low complexity predominate over residues glutamate 694–glutamate 711.

The protein belongs to the polyribonucleotide nucleotidyltransferase family. Component of the RNA degradosome, which is a multiprotein complex involved in RNA processing and mRNA degradation. Mg(2+) is required as a cofactor.

Its subcellular location is the cytoplasm. The enzyme catalyses RNA(n+1) + phosphate = RNA(n) + a ribonucleoside 5'-diphosphate. Involved in mRNA degradation. Catalyzes the phosphorolysis of single-stranded polyribonucleotides processively in the 3'- to 5'-direction. In Enterobacter sp. (strain 638), this protein is Polyribonucleotide nucleotidyltransferase.